The following is a 93-amino-acid chain: Small ribosomal subunit protein uS19 (93 aa).

The protein belongs to the universal ribosomal protein uS19 family.

Protein S19 forms a complex with S13 that binds strongly to the 16S ribosomal RNA. This Wolinella succinogenes (strain ATCC 29543 / DSM 1740 / CCUG 13145 / JCM 31913 / LMG 7466 / NCTC 11488 / FDC 602W) (Vibrio succinogenes) protein is Small ribosomal subunit protein uS19.